The primary structure comprises 424 residues: Histidine--tRNA ligase (424 aa).

This sequence belongs to the class-II aminoacyl-tRNA synthetase family. In terms of assembly, homodimer.

The protein localises to the cytoplasm. The enzyme catalyses tRNA(His) + L-histidine + ATP = L-histidyl-tRNA(His) + AMP + diphosphate + H(+). The polypeptide is Histidine--tRNA ligase (Thioalkalivibrio sulfidiphilus (strain HL-EbGR7)).